Consider the following 192-residue polypeptide: Peptide methionine sulfoxide reductase MsrA 1 (192 aa).

C25 is a catalytic residue.

The protein belongs to the MsrA Met sulfoxide reductase family.

It catalyses the reaction L-methionyl-[protein] + [thioredoxin]-disulfide + H2O = L-methionyl-(S)-S-oxide-[protein] + [thioredoxin]-dithiol. It carries out the reaction [thioredoxin]-disulfide + L-methionine + H2O = L-methionine (S)-S-oxide + [thioredoxin]-dithiol. Functionally, has an important function as a repair enzyme for proteins that have been inactivated by oxidation. Catalyzes the reversible oxidation-reduction of methionine sulfoxide in proteins to methionine. The chain is Peptide methionine sulfoxide reductase MsrA 1 from Rhodopirellula baltica (strain DSM 10527 / NCIMB 13988 / SH1).